Consider the following 378-residue polypeptide: Ribosomal RNA large subunit methyltransferase G (378 aa).

The protein belongs to the methyltransferase superfamily. RlmG family.

It localises to the cytoplasm. The catalysed reaction is guanosine(1835) in 23S rRNA + S-adenosyl-L-methionine = N(2)-methylguanosine(1835) in 23S rRNA + S-adenosyl-L-homocysteine + H(+). In terms of biological role, specifically methylates the guanine in position 1835 (m2G1835) of 23S rRNA. In Escherichia coli O157:H7, this protein is Ribosomal RNA large subunit methyltransferase G.